The chain runs to 238 residues: Ribonuclease PH (238 aa).

Phosphate is bound by residues Arg-86 and Gly-124–Arg-126.

The protein belongs to the RNase PH family. In terms of assembly, homohexameric ring arranged as a trimer of dimers.

It carries out the reaction tRNA(n+1) + phosphate = tRNA(n) + a ribonucleoside 5'-diphosphate. In terms of biological role, phosphorolytic 3'-5' exoribonuclease that plays an important role in tRNA 3'-end maturation. Removes nucleotide residues following the 3'-CCA terminus of tRNAs; can also add nucleotides to the ends of RNA molecules by using nucleoside diphosphates as substrates, but this may not be physiologically important. Probably plays a role in initiation of 16S rRNA degradation (leading to ribosome degradation) during starvation. This is Ribonuclease PH from Shigella flexneri serotype 5b (strain 8401).